The primary structure comprises 337 residues: Glyceraldehyde-3-phosphate dehydrogenase (337 aa).

NAD(+)-binding positions include 12–13 (RI), Asp34, and Arg79. Residues 150–152 (SCT), Thr181, 210–211 (TG), and Arg233 contribute to the D-glyceraldehyde 3-phosphate site. Cys151 serves as the catalytic Nucleophile. Asn315 lines the NAD(+) pocket.

It belongs to the glyceraldehyde-3-phosphate dehydrogenase family. As to quaternary structure, homotetramer.

The protein localises to the cytoplasm. The catalysed reaction is D-glyceraldehyde 3-phosphate + phosphate + NAD(+) = (2R)-3-phospho-glyceroyl phosphate + NADH + H(+). It functions in the pathway carbohydrate degradation; glycolysis; pyruvate from D-glyceraldehyde 3-phosphate: step 1/5. This is Glyceraldehyde-3-phosphate dehydrogenase (GPD) from Podospora anserina (Pleurage anserina).